The following is a 299-amino-acid chain: Acetylglutamate kinase (299 aa).

Residues 72 to 73 (GG), Arg-94, and Asn-196 contribute to the substrate site.

Belongs to the acetylglutamate kinase family. ArgB subfamily.

It localises to the cytoplasm. It carries out the reaction N-acetyl-L-glutamate + ATP = N-acetyl-L-glutamyl 5-phosphate + ADP. The protein operates within amino-acid biosynthesis; L-arginine biosynthesis; N(2)-acetyl-L-ornithine from L-glutamate: step 2/4. Its function is as follows. Catalyzes the ATP-dependent phosphorylation of N-acetyl-L-glutamate. The chain is Acetylglutamate kinase from Burkholderia thailandensis (strain ATCC 700388 / DSM 13276 / CCUG 48851 / CIP 106301 / E264).